A 218-amino-acid polypeptide reads, in one-letter code: Large ribosomal subunit protein uL4 (218 aa).

The interval 54–106 (GTHAVKNRGAVSGGGRKPWKQKGTGRARQGSIRAPQWYHGGVAHGPVPRDYSQ) is disordered.

This sequence belongs to the universal ribosomal protein uL4 family. Part of the 50S ribosomal subunit.

In terms of biological role, one of the primary rRNA binding proteins, this protein initially binds near the 5'-end of the 23S rRNA. It is important during the early stages of 50S assembly. It makes multiple contacts with different domains of the 23S rRNA in the assembled 50S subunit and ribosome. Its function is as follows. Forms part of the polypeptide exit tunnel. The chain is Large ribosomal subunit protein uL4 from Bifidobacterium animalis subsp. lactis (strain AD011).